The chain runs to 532 residues: Apoptosis-inducing factor 1, mitochondrial (532 aa).

The N-terminal 26 residues, 1 to 26, are a transit peptide targeting the mitochondrion; the sequence is MIRNLTKLTKFTIGNRFYQSSSKGRF. The segment at 63-84 is disordered; that stretch reads STPSIDVKEKKSQPPKTKEDYQ. The tract at residues 98–440 is FAD-dependent oxidoreductase; the sequence is YVIIGGGTAA…APYTYQPFFW (343 aa). Residues 102–106, 128–129, R136, and K141 contribute to the FAD site; these read GGGTA and KE. An NAD(+)-binding site is contributed by W160. FAD contacts are provided by V188 and R236. Residues 260–263, E288, and G353 contribute to the NAD(+) site; that span reads GGFL. Residue D392 participates in FAD binding. A Nuclear localization signal motif is present at residues 400 to 406; the sequence is SLGVRRR. Residues 408–409, W440, and E450 contribute to the NAD(+) site; that span reads EH. Residues 409–410 and W440 contribute to the FAD site; that span reads HH.

This sequence belongs to the FAD-dependent oxidoreductase family. FAD is required as a cofactor.

Its subcellular location is the mitochondrion. The protein localises to the cytoplasm. The protein resides in the nucleus. The catalysed reaction is A + NADH + H(+) = AH2 + NAD(+). In terms of biological role, probable NADH oxidoreductase that acts as a caspase-independent mitochondrial effector of apoptotic cell death. The protein is Apoptosis-inducing factor 1, mitochondrial (aif) of Dictyostelium discoideum (Social amoeba).